We begin with the raw amino-acid sequence, 597 residues long: UvrABC system protein C (597 aa).

Residues 14 to 91 (KKPGCYLWKD…INQYQPRFNL (78 aa)) form the GIY-YIG domain.

The protein belongs to the UvrC family. In terms of assembly, interacts with UvrB in an incision complex.

It is found in the cytoplasm. In terms of biological role, the UvrABC repair system catalyzes the recognition and processing of DNA lesions. UvrC both incises the 5' and 3' sides of the lesion. The N-terminal half is responsible for the 3' incision and the C-terminal half is responsible for the 5' incision. The sequence is that of UvrABC system protein C from Mycoplasma genitalium (strain ATCC 33530 / DSM 19775 / NCTC 10195 / G37) (Mycoplasmoides genitalium).